We begin with the raw amino-acid sequence, 157 residues long: MPRRREVPKREILPDPKFGNVELSKFMNVIMEGGKKAVAERIIYGALDLIQKKHPDKDPLEAFVVAINNVKPMVEVKSRRVGGANYQVPVEVRPVRRLALSMRWLKEAARKRGEKSMAQRLANELLEATEGRGGAMKRRDEVHRMAEANKAFSHFRF.

It belongs to the universal ribosomal protein uS7 family. As to quaternary structure, part of the 30S ribosomal subunit. Contacts proteins S9 and S11.

In terms of biological role, one of the primary rRNA binding proteins, it binds directly to 16S rRNA where it nucleates assembly of the head domain of the 30S subunit. Is located at the subunit interface close to the decoding center, probably blocks exit of the E-site tRNA. This is Small ribosomal subunit protein uS7 from Delftia acidovorans (strain DSM 14801 / SPH-1).